Here is a 457-residue protein sequence, read N- to C-terminus: Chromosomal replication initiator protein DnaA (457 aa).

The domain I, interacts with DnaA modulators stretch occupies residues 1-73 (MANNYQTLYD…SKYLSEEFKK (73 aa)). A domain II region spans residues 73-108 (KENIVNFEFIIDNEKLLINSNFLIKETNIKNRFNFS). The tract at residues 109–331 (DELLRYNFNN…GNLKQICFWA (223 aa)) is domain III, AAA+ region. Residues G156, G158, K159, and T160 each coordinate ATP. The tract at residues 332–457 (DNDTNKDLII…LQINLIINKF (126 aa)) is domain IV, binds dsDNA.

It belongs to the DnaA family. In terms of assembly, oligomerizes as a right-handed, spiral filament on DNA at oriC.

It localises to the cytoplasm. Its function is as follows. Plays an essential role in the initiation and regulation of chromosomal replication. ATP-DnaA binds to the origin of replication (oriC) to initiate formation of the DNA replication initiation complex once per cell cycle. Binds the DnaA box (a 9 base pair repeat at the origin) and separates the double-stranded (ds)DNA. Forms a right-handed helical filament on oriC DNA; dsDNA binds to the exterior of the filament while single-stranded (ss)DNA is stabiized in the filament's interior. The ATP-DnaA-oriC complex binds and stabilizes one strand of the AT-rich DNA unwinding element (DUE), permitting loading of DNA polymerase. After initiation quickly degrades to an ADP-DnaA complex that is not apt for DNA replication. Binds acidic phospholipids. This chain is Chromosomal replication initiator protein DnaA, found in Ureaplasma parvum serovar 3 (strain ATCC 700970).